A 189-amino-acid polypeptide reads, in one-letter code: Small ribosomal subunit protein uS5 (189 aa).

The S5 DRBM domain occupies 22-85 (FVDKLVAINR…ESAKRDLIFV (64 aa)).

Belongs to the universal ribosomal protein uS5 family. In terms of assembly, part of the 30S ribosomal subunit. Contacts proteins S4 and S8.

Its function is as follows. With S4 and S12 plays an important role in translational accuracy. Functionally, located at the back of the 30S subunit body where it stabilizes the conformation of the head with respect to the body. In Agrobacterium fabrum (strain C58 / ATCC 33970) (Agrobacterium tumefaciens (strain C58)), this protein is Small ribosomal subunit protein uS5.